A 157-amino-acid polypeptide reads, in one-letter code: Probable succinate transporter subunit YjjB (157 aa).

Helical transmembrane passes span 8 to 28, 50 to 70, 87 to 107, and 129 to 149; these read FALAQDMILAAIPAVGFAMVF, MILMTSGLNIEWSTFMASMLV, VFTVAAVIPMFPGISAYTAMI, and FLTASSIVGALSIGLSIPGLW.

The protein belongs to the ThrE exporter (TC 2.A.79) family. The transporter is composed of YjjB and YjjP.

It is found in the cell inner membrane. In terms of biological role, involved in succinate export with YjjP. Both proteins are required for export. In Escherichia coli (strain ATCC 8739 / DSM 1576 / NBRC 3972 / NCIMB 8545 / WDCM 00012 / Crooks), this protein is Probable succinate transporter subunit YjjB.